The sequence spans 281 residues: Cytochrome c oxidase subunit 3 (281 aa).

Residues 1–15 (MTHQTHAYHMVNPSP) lie on the Mitochondrial matrix side of the membrane. The helical transmembrane segment at 16–34 (WPLTGALSALLLTSGLIMW) threads the bilayer. The Mitochondrial intermembrane segment spans residues 35–40 (FHYNSS). A helical membrane pass occupies residues 41–66 (TLMFMGLTTMLLTMYQWWRDIIREGT). Topologically, residues 67–72 (FQGHHT) are mitochondrial matrix. The chain crosses the membrane as a helical span at residues 73–105 (PVVQKGLRYGMILFILSEVFFFIGFFWAFYHSS). The Mitochondrial intermembrane segment spans residues 106–128 (LAPTPELGGCWPPTGIHPLNPLE). The chain crosses the membrane as a helical span at residues 129-152 (VPLLNTSILLASGVSITWAHHSLM). The Mitochondrial matrix portion of the chain corresponds to 153 to 155 (EGN). The helical transmembrane segment at 156 to 183 (RKQMIQALLITISLGLYFTILQAMEYYE) threads the bilayer. Topologically, residues 184–190 (ASFTISD) are mitochondrial intermembrane. A helical transmembrane segment spans residues 191–223 (GVYGSTFFVATGFHGLHVIIGSTFLIVCLLRQL). Topologically, residues 224–232 (FYHFTSTHH) are mitochondrial matrix. The helical transmembrane segment at 233–256 (FGFEAAAWYWHFVDVVWLFLYVSI) threads the bilayer. Topologically, residues 257–281 (YWWGSYFSSMISTTDFQSLSSGSNQ) are mitochondrial intermembrane.

The protein belongs to the cytochrome c oxidase subunit 3 family. Component of the cytochrome c oxidase (complex IV, CIV), a multisubunit enzyme composed of 14 subunits. The complex is composed of a catalytic core of 3 subunits MT-CO1, MT-CO2 and MT-CO3, encoded in the mitochondrial DNA, and 11 supernumerary subunits COX4I, COX5A, COX5B, COX6A, COX6B, COX6C, COX7A, COX7B, COX7C, COX8 and NDUFA4, which are encoded in the nuclear genome. The complex exists as a monomer or a dimer and forms supercomplexes (SCs) in the inner mitochondrial membrane with NADH-ubiquinone oxidoreductase (complex I, CI) and ubiquinol-cytochrome c oxidoreductase (cytochrome b-c1 complex, complex III, CIII), resulting in different assemblies (supercomplex SCI(1)III(2)IV(1) and megacomplex MCI(2)III(2)IV(2)).

It localises to the mitochondrion inner membrane. The enzyme catalyses 4 Fe(II)-[cytochrome c] + O2 + 8 H(+)(in) = 4 Fe(III)-[cytochrome c] + 2 H2O + 4 H(+)(out). In terms of biological role, component of the cytochrome c oxidase, the last enzyme in the mitochondrial electron transport chain which drives oxidative phosphorylation. The respiratory chain contains 3 multisubunit complexes succinate dehydrogenase (complex II, CII), ubiquinol-cytochrome c oxidoreductase (cytochrome b-c1 complex, complex III, CIII) and cytochrome c oxidase (complex IV, CIV), that cooperate to transfer electrons derived from NADH and succinate to molecular oxygen, creating an electrochemical gradient over the inner membrane that drives transmembrane transport and the ATP synthase. Cytochrome c oxidase is the component of the respiratory chain that catalyzes the reduction of oxygen to water. Electrons originating from reduced cytochrome c in the intermembrane space (IMS) are transferred via the dinuclear copper A center (CU(A)) of subunit 2 and heme A of subunit 1 to the active site in subunit 1, a binuclear center (BNC) formed by heme A3 and copper B (CU(B)). The BNC reduces molecular oxygen to 2 water molecules using 4 electrons from cytochrome c in the IMS and 4 protons from the mitochondrial matrix. In Didelphis virginiana (North American opossum), this protein is Cytochrome c oxidase subunit 3 (MT-CO3).